A 94-amino-acid chain; its full sequence is Co-chaperonin GroES (94 aa).

It belongs to the GroES chaperonin family. Heptamer of 7 subunits arranged in a ring. Interacts with the chaperonin GroEL.

It is found in the cytoplasm. Its function is as follows. Together with the chaperonin GroEL, plays an essential role in assisting protein folding. The GroEL-GroES system forms a nano-cage that allows encapsulation of the non-native substrate proteins and provides a physical environment optimized to promote and accelerate protein folding. GroES binds to the apical surface of the GroEL ring, thereby capping the opening of the GroEL channel. This chain is Co-chaperonin GroES, found in Alkaliphilus oremlandii (strain OhILAs) (Clostridium oremlandii (strain OhILAs)).